The chain runs to 517 residues: Putative alpha-L-fucosidase 1 (517 aa).

The N-terminal stretch at 1-20 (MATILLLLLGLLVGLPLLRA) is a signal peptide. 7 N-linked (GlcNAc...) asparagine glycosylation sites follow: Asn-119, Asn-249, Asn-296, Asn-321, Asn-352, Asn-496, and Asn-511.

It belongs to the glycosyl hydrolase 29 family.

Its subcellular location is the secreted. It localises to the extracellular space. The protein resides in the apoplast. The catalysed reaction is an alpha-L-fucoside + H2O = L-fucose + an alcohol. Functionally, alpha-L-fucosidase is responsible for hydrolyzing the alpha-1,6-linked fucose joined to the reducing-end N-acetylglucosamine of the carbohydrate moieties of glycoproteins. Active only against 2'-fucosyl-lactitol when heterologously expressed. This chain is Putative alpha-L-fucosidase 1, found in Oryza sativa subsp. japonica (Rice).